The sequence spans 117 residues: UPF0342 protein lwe2240 (117 aa).

The protein belongs to the UPF0342 family.

This chain is UPF0342 protein lwe2240, found in Listeria welshimeri serovar 6b (strain ATCC 35897 / DSM 20650 / CCUG 15529 / CIP 8149 / NCTC 11857 / SLCC 5334 / V8).